We begin with the raw amino-acid sequence, 432 residues long: Trigger factor (432 aa).

In terms of domain architecture, PPIase FKBP-type spans 161–246 (GTRATINFVG…VVKVEARELP (86 aa)).

This sequence belongs to the FKBP-type PPIase family. Tig subfamily.

It is found in the cytoplasm. The enzyme catalyses [protein]-peptidylproline (omega=180) = [protein]-peptidylproline (omega=0). Functionally, involved in protein export. Acts as a chaperone by maintaining the newly synthesized protein in an open conformation. Functions as a peptidyl-prolyl cis-trans isomerase. The polypeptide is Trigger factor (Aliivibrio salmonicida (strain LFI1238) (Vibrio salmonicida (strain LFI1238))).